The primary structure comprises 307 residues: MVQQLSLFGSIGDDGYDLLISTLTTISGNPPLLYNSLCTVWKPNPSYDVENVNSRNQLVEPNRIKLSKEVPFSYLIDETMMDKPLNFRILKSFTNDKIPLNYAMTRNILHNTVPQVTNFNSTNEDQNNSKHTEDTVNESRNSDDIIDVDMDASPAPSNESCSPWSLQISDIPAAGNNRSVSMQTIAETIILSSAGKNSSVSSLMNGLGYVFEFQYLTIGVKFFMKHGLILELQKIWQIEEAGNSQITSGGFLLKAYINVSRGTDIDRINYTETALMNLKKELQGYIELSVPDRQSMDSRVAHGNILI.

Over residues 117–126 (TNFNSTNEDQ) the composition is skewed to polar residues. Positions 117–162 (TNFNSTNEDQNNSKHTEDTVNESRNSDDIIDVDMDASPAPSNESCS) are disordered.

Belongs to the Mediator complex subunit 18 family. In terms of assembly, component of the Mediator complex, which is composed of at least 21 subunits that form three structurally distinct submodules. The Mediator head module contains MED6, MED8, MED11, SRB4/MED17, SRB5/MED18, ROX3/MED19, SRB2/MED20 and SRB6/MED22, the middle module contains MED1, MED4, NUT1/MED5, MED7, CSE2/MED9, NUT2/MED10, SRB7/MED21 and SOH1/MED31, and the tail module contains MED2, PGD1/MED3, RGR1/MED14, GAL11/MED15 and SIN4/MED16. The head and the middle modules interact directly with RNA polymerase II, whereas the elongated tail module interacts with gene-specific regulatory proteins. SRB5/MED18 interacts directly with MED8 and SRB2/MED20.

The protein resides in the nucleus. In terms of biological role, component of the Mediator complex, a coactivator involved in the regulated transcription of nearly all RNA polymerase II-dependent genes. Mediator functions as a bridge to convey information from gene-specific regulatory proteins to the basal RNA polymerase II transcription machinery. The Mediator complex, having a compact conformation in its free form, is recruited to promoters by direct interactions with regulatory proteins and serves for the assembly of a functional preinitiation complex with RNA polymerase II and the general transcription factors. The Mediator complex unfolds to an extended conformation and partially surrounds RNA polymerase II, specifically interacting with the unphosphorylated form of the C-terminal domain (CTD) of RNA polymerase II. The Mediator complex dissociates from the RNA polymerase II holoenzyme and stays at the promoter when transcriptional elongation begins. The chain is Mediator of RNA polymerase II transcription subunit 18 (SRB5) from Saccharomyces cerevisiae (strain ATCC 204508 / S288c) (Baker's yeast).